The following is a 763-amino-acid chain: Protein CHROMATIN REMODELING 19 (763 aa).

Disordered stretches follow at residues 1–43 (MKRD…TPSI) and 114–149 (EDEE…RGED). The span at 23–34 (VLKRPRTPKKTR) shows a compositional bias: basic residues. Residues 114-135 (EDEEASDDDDDEAESSASEDEF) show a composition bias toward acidic residues. One can recognise a Helicase ATP-binding domain in the interval 226–404 (LLYKKGIEGA…WSLLEFMLPD (179 aa)). 239–246 (DEMGLGKT) is an ATP binding site. The DEAH box motif lies at 353-356 (DEAH). Residues 462-482 (RKQEDAYKEAIEEYRAASQAR) are a coiled coil. The Nuclear localization signal signature appears at 520-527 (IRRIYSDE). A Helicase C-terminal domain is found at 592 to 742 (TLAELLPSMK…AAVLESGVHV (151 aa)).

Belongs to the SNF2/RAD54 helicase family. Interacts with SUVR2 and itself.

Its subcellular location is the nucleus. DNA helicase that possesses intrinsic ATP-dependent nucleosome-remodeling activity and is both required for DNA repair and heterochromatin organization. Promotes DNA end resection of double-strand breaks (DSBs) following DNA damage: probably acts by weakening histone DNA interactions in nucleosomes flanking DSBs. Probable chromatin remodeling factor. Probable helicase-like transcription factor involved in transcriptional gene silencing. Associates with SUVR2 and contributes to transcriptional gene silencing at RNA-directed DNA methylation (RdDM) target loci but also at RdDM-independent target loci. May be involved in nucleosome positioning to form ordered nucleosome arrays on chromatin. The protein is Protein CHROMATIN REMODELING 19 of Arabidopsis thaliana (Mouse-ear cress).